A 353-amino-acid chain; its full sequence is UDP-N-acetylglucosamine--N-acetylmuramyl-(pentapeptide) pyrophosphoryl-undecaprenol N-acetylglucosamine transferase (353 aa).

UDP-N-acetyl-alpha-D-glucosamine-binding positions include 10 to 12 (TGG), asparagine 124, serine 183, and glutamine 283.

The protein belongs to the glycosyltransferase 28 family. MurG subfamily.

Its subcellular location is the cell inner membrane. It catalyses the reaction di-trans,octa-cis-undecaprenyl diphospho-N-acetyl-alpha-D-muramoyl-L-alanyl-D-glutamyl-meso-2,6-diaminopimeloyl-D-alanyl-D-alanine + UDP-N-acetyl-alpha-D-glucosamine = di-trans,octa-cis-undecaprenyl diphospho-[N-acetyl-alpha-D-glucosaminyl-(1-&gt;4)]-N-acetyl-alpha-D-muramoyl-L-alanyl-D-glutamyl-meso-2,6-diaminopimeloyl-D-alanyl-D-alanine + UDP + H(+). It participates in cell wall biogenesis; peptidoglycan biosynthesis. In terms of biological role, cell wall formation. Catalyzes the transfer of a GlcNAc subunit on undecaprenyl-pyrophosphoryl-MurNAc-pentapeptide (lipid intermediate I) to form undecaprenyl-pyrophosphoryl-MurNAc-(pentapeptide)GlcNAc (lipid intermediate II). The polypeptide is UDP-N-acetylglucosamine--N-acetylmuramyl-(pentapeptide) pyrophosphoryl-undecaprenol N-acetylglucosamine transferase (Helicobacter pylori (strain P12)).